We begin with the raw amino-acid sequence, 578 residues long: Forkhead box protein P1 (578 aa).

The C2H2-type zinc-finger motif lies at 208-233 (GVCKWPGCETICEDFPSFLKHLNSEH). The tract at residues 250–271 (VQQLELQLSKDKERLQAMMSHL) is leucine-zipper. Residues 284–288 (PLNLV) form a ctbp1-binding region. Positions 293–305 (LSKTASEASPQSL) are enriched in polar residues. Positions 293–325 (LSKTASEASPQSLPHTPTTPTAPLTPITQGPSV) are disordered. Residues 306–320 (PHTPTTPTAPLTPIT) show a composition bias toward low complexity. Positions 366–456 (RPPFTYASLI…PQKISGSPTL (91 aa)) form a DNA-binding region, fork-head. The interval 511-578 (MEHTSSNGSD…EDDPVNDDME (68 aa)) is disordered. The span at 515–527 (SSNGSDSSPGRSP) shows a compositional bias: low complexity. Over residues 568-578 (YEDDPVNDDME) the composition is skewed to acidic residues.

As to quaternary structure, dimerization is required for DNA-binding. Isoform a, but not isoform b, interacts with ctbp1. As to expression, all isoforms show similar spatial expression. Localized to the animal hemisphere of early cleavage stage embryos. At tailbud stages, expressed in regions of the brain, eye and the splanchnic mesodermal layer of the lateral plate mesoderm surrounding the gut. At stage 35, expressed within the lens of the eye, in distinct regions of the head mesenchyme and in the area anterior to the gut. In the brain the anterior-most expression is restricted to the outer region of the mesencephalon. With ongoing development, additional expression is found in the curling gut.

The protein localises to the nucleus. Its function is as follows. Transcriptional repressor. The chain is Forkhead box protein P1 from Xenopus laevis (African clawed frog).